A 368-amino-acid polypeptide reads, in one-letter code: Phosphoserine aminotransferase (368 aa).

Residue arginine 44 participates in L-glutamate binding. Residues 78 to 79 (AT), tryptophan 104, threonine 157, aspartate 179, and glutamine 202 contribute to the pyridoxal 5'-phosphate site. Lysine 203 bears the N6-(pyridoxal phosphate)lysine mark. 244–245 (NT) provides a ligand contact to pyridoxal 5'-phosphate.

This sequence belongs to the class-V pyridoxal-phosphate-dependent aminotransferase family. SerC subfamily. As to quaternary structure, homodimer. Requires pyridoxal 5'-phosphate as cofactor.

The protein localises to the cytoplasm. The enzyme catalyses O-phospho-L-serine + 2-oxoglutarate = 3-phosphooxypyruvate + L-glutamate. It carries out the reaction 4-(phosphooxy)-L-threonine + 2-oxoglutarate = (R)-3-hydroxy-2-oxo-4-phosphooxybutanoate + L-glutamate. The protein operates within amino-acid biosynthesis; L-serine biosynthesis; L-serine from 3-phospho-D-glycerate: step 2/3. It functions in the pathway cofactor biosynthesis; pyridoxine 5'-phosphate biosynthesis; pyridoxine 5'-phosphate from D-erythrose 4-phosphate: step 3/5. Catalyzes the reversible conversion of 3-phosphohydroxypyruvate to phosphoserine and of 3-hydroxy-2-oxo-4-phosphonooxybutanoate to phosphohydroxythreonine. In Neisseria meningitidis serogroup C / serotype 2a (strain ATCC 700532 / DSM 15464 / FAM18), this protein is Phosphoserine aminotransferase.